We begin with the raw amino-acid sequence, 356 residues long: Peptide chain release factor 1 (356 aa).

N5-methylglutamine is present on Gln233.

The protein belongs to the prokaryotic/mitochondrial release factor family. Post-translationally, methylated by PrmC. Methylation increases the termination efficiency of RF1.

It localises to the cytoplasm. Functionally, peptide chain release factor 1 directs the termination of translation in response to the peptide chain termination codons UAG and UAA. The chain is Peptide chain release factor 1 from Bacillus licheniformis (strain ATCC 14580 / DSM 13 / JCM 2505 / CCUG 7422 / NBRC 12200 / NCIMB 9375 / NCTC 10341 / NRRL NRS-1264 / Gibson 46).